Here is a 957-residue protein sequence, read N- to C-terminus: Glycine dehydrogenase (decarboxylating) (957 aa).

At Lys-708 the chain carries N6-(pyridoxal phosphate)lysine.

The protein belongs to the GcvP family. As to quaternary structure, the glycine cleavage system is composed of four proteins: P, T, L and H. Requires pyridoxal 5'-phosphate as cofactor.

The catalysed reaction is N(6)-[(R)-lipoyl]-L-lysyl-[glycine-cleavage complex H protein] + glycine + H(+) = N(6)-[(R)-S(8)-aminomethyldihydrolipoyl]-L-lysyl-[glycine-cleavage complex H protein] + CO2. Functionally, the glycine cleavage system catalyzes the degradation of glycine. The P protein binds the alpha-amino group of glycine through its pyridoxal phosphate cofactor; CO(2) is released and the remaining methylamine moiety is then transferred to the lipoamide cofactor of the H protein. This Klebsiella pneumoniae (strain 342) protein is Glycine dehydrogenase (decarboxylating).